The sequence spans 1714 residues: Collagen alpha-1(XXIV) chain (1714 aa).

Positions M1–V35 are cleaved as a signal peptide. One can recognise a Laminin G-like domain in the interval K141–G217. N155, N321, and N376 each carry an N-linked (GlcNAc...) asparagine glycan. 17 Collagen-like domains span residues L487–S542, G552–P611, G660–Q719, G741–P797, G798–V857, G858–K887, G888–K947, G948–M1007, G1011–P1052, G1053–R1112, G1116–G1170, R1172–D1196, G1201–G1249, G1252–G1306, G1309–K1353, G1354–A1413, and G1420–R1479. The tract at residues L487–Q1481 is disordered. Positions P496–I505 are enriched in pro residues. Composition is skewed to low complexity over residues H574–P587 and S685–M701. Residues P893–I902 are compositionally biased toward pro residues. The segment covering D985–S1019 has biased composition (low complexity). Gly residues-rich tracts occupy residues G1035 to G1044 and G1065 to G1074. Low complexity-rich tracts occupy residues S1132 to K1145 and H1174 to P1186. The segment covering L1256–K1266 has biased composition (basic and acidic residues). The segment covering A1271–Q1293 has biased composition (low complexity). Positions G1318 to G1327 are enriched in gly residues. Over residues Q1466 to P1476 the composition is skewed to pro residues. The 200-residue stretch at E1515 to L1714 folds into the Fibrillar collagen NC1 domain.

It belongs to the fibrillar collagen family.

The protein localises to the secreted. It is found in the extracellular space. It localises to the extracellular matrix. May participate in regulating type I collagen fibrillogenesis at specific anatomical locations during fetal development. The protein is Collagen alpha-1(XXIV) chain (COL24A1) of Homo sapiens (Human).